We begin with the raw amino-acid sequence, 186 residues long: dCTP deaminase (186 aa).

106–111 (KSTYAR) lines the dCTP pocket. The active-site Proton donor/acceptor is E132. The dCTP site is built by Q151, Y166, and Q176.

Belongs to the dCTP deaminase family. Homotrimer.

The enzyme catalyses dCTP + H2O + H(+) = dUTP + NH4(+). It functions in the pathway pyrimidine metabolism; dUMP biosynthesis; dUMP from dCTP (dUTP route): step 1/2. Its function is as follows. Catalyzes the deamination of dCTP to dUTP. This Nautilia profundicola (strain ATCC BAA-1463 / DSM 18972 / AmH) protein is dCTP deaminase.